A 279-amino-acid chain; its full sequence is MHTMTPLLKKQQAGEKLVMLTAYDYPSAKLAEAGHVDLLLVGDSLGNVILGYDSTIAVTVDDMVHHAKAVRRGAPATFMVVDMPFASYHGSFDRTLEAAARIFQESGADALKLEGAGDILTTIRRLTEAGMPCVAHLGLTPQSVGVLEGFKVQGKSLAAAEQLIADSLAAEQAGAKMLVLECVPHPLAKRVQELLTIPVIGIGAGADVAGQVLVYHDILTYGVGRLPKFVKAYADWNTSGTEAIARYVEDVKNGTFPELAHSFLMDEELIGALYGGFKE.

The Mg(2+) site is built by Asp-43 and Asp-82. Residues 43 to 44 (DS), Asp-82, and Lys-112 contribute to the 3-methyl-2-oxobutanoate site. Glu-114 lines the Mg(2+) pocket. Catalysis depends on Glu-181, which acts as the Proton acceptor.

Belongs to the PanB family. In terms of assembly, homodecamer; pentamer of dimers. The cofactor is Mg(2+).

Its subcellular location is the cytoplasm. The enzyme catalyses 3-methyl-2-oxobutanoate + (6R)-5,10-methylene-5,6,7,8-tetrahydrofolate + H2O = 2-dehydropantoate + (6S)-5,6,7,8-tetrahydrofolate. Its pathway is cofactor biosynthesis; (R)-pantothenate biosynthesis; (R)-pantoate from 3-methyl-2-oxobutanoate: step 1/2. In terms of biological role, catalyzes the reversible reaction in which hydroxymethyl group from 5,10-methylenetetrahydrofolate is transferred onto alpha-ketoisovalerate to form ketopantoate. The sequence is that of 3-methyl-2-oxobutanoate hydroxymethyltransferase from Exiguobacterium sibiricum (strain DSM 17290 / CCUG 55495 / CIP 109462 / JCM 13490 / 255-15).